The following is a 505-amino-acid chain: Chemotaxis regulatory protein ChePep (505 aa).

Disordered stretches follow at residues 154 to 403 (EPNN…EDIP) and 420 to 465 (EAVA…SSPL). Composition is skewed to basic and acidic residues over residues 172–263 (EEVK…EKTQ), 289–311 (ENKEKTQESAEIPQDKEIQEVVT), 337–346 (QAHELEKQEI), 359–373 (QDKEVQELEIPKEET), and 386–398 (PQEKETQEDHYES). A compositionally biased stretch (low complexity) spans 440 to 451 (TETSKNENNTET).

In terms of assembly, interacts with CheZ; the interaction is essential for each other polar localization.

The protein localises to the cytoplasm. In terms of biological role, plays an essential role in chemotaxis. Regulates flagellar rotation through the formation of a complex with chemotaxis protein CheZ. Plays a major role in colonization of the stomach. The protein is Chemotaxis regulatory protein ChePep of Helicobacter pylori (strain ATCC 700392 / 26695) (Campylobacter pylori).